Reading from the N-terminus, the 378-residue chain is Erythronate-4-phosphate dehydrogenase (378 aa).

Residues S45 and T66 each coordinate substrate. The NAD(+) site is built by D146 and T175. R208 is an active-site residue. D232 serves as a coordination point for NAD(+). E237 is an active-site residue. Catalysis depends on H254, which acts as the Proton donor. G257 lines the NAD(+) pocket. Residue Y258 coordinates substrate.

Belongs to the D-isomer specific 2-hydroxyacid dehydrogenase family. PdxB subfamily. In terms of assembly, homodimer.

It is found in the cytoplasm. It catalyses the reaction 4-phospho-D-erythronate + NAD(+) = (R)-3-hydroxy-2-oxo-4-phosphooxybutanoate + NADH + H(+). It functions in the pathway cofactor biosynthesis; pyridoxine 5'-phosphate biosynthesis; pyridoxine 5'-phosphate from D-erythrose 4-phosphate: step 2/5. Functionally, catalyzes the oxidation of erythronate-4-phosphate to 3-hydroxy-2-oxo-4-phosphonooxybutanoate. This Escherichia coli O157:H7 protein is Erythronate-4-phosphate dehydrogenase.